The chain runs to 435 residues: Serine hydroxymethyltransferase (435 aa).

(6S)-5,6,7,8-tetrahydrofolate-binding positions include Leu-131 and 135-137 (GHL). Lys-240 bears the N6-(pyridoxal phosphate)lysine mark.

It belongs to the SHMT family. In terms of assembly, homodimer. Pyridoxal 5'-phosphate is required as a cofactor.

The protein resides in the cytoplasm. It carries out the reaction (6R)-5,10-methylene-5,6,7,8-tetrahydrofolate + glycine + H2O = (6S)-5,6,7,8-tetrahydrofolate + L-serine. The protein operates within one-carbon metabolism; tetrahydrofolate interconversion. It participates in amino-acid biosynthesis; glycine biosynthesis; glycine from L-serine: step 1/1. Functionally, catalyzes the reversible interconversion of serine and glycine with tetrahydrofolate (THF) serving as the one-carbon carrier. This reaction serves as the major source of one-carbon groups required for the biosynthesis of purines, thymidylate, methionine, and other important biomolecules. Also exhibits THF-independent aldolase activity toward beta-hydroxyamino acids, producing glycine and aldehydes, via a retro-aldol mechanism. In Bifidobacterium longum subsp. infantis (strain ATCC 15697 / DSM 20088 / JCM 1222 / NCTC 11817 / S12), this protein is Serine hydroxymethyltransferase.